A 517-amino-acid polypeptide reads, in one-letter code: Pseudaminic acid cytidylyltransferase and UDP-2,4-diacetamido-2,4,6-trideoxy-beta-L-altropyranose hydrolase (517 aa).

Positions 1-208 are pseudaminic acid cytidylyltransferase; the sequence is MRAIAIVLAR…ELSPLEVQDI (208 aa). A UDP-2,4-diacetamido-2,4,6-trideoxy-beta-L-altropyranose hydrolase region spans residues 209–517; sequence AHFRRFRISQ…EGALREFLEI (309 aa). Residue H244 is the Proton acceptor; for UDP-2,4-diacetamido-2,4,6-trideoxy-beta-L-altropyranose hydrolase activity of the active site.

The protein in the N-terminal section; belongs to the CMP-NeuNAc synthase family. It in the C-terminal section; belongs to the PseG family. As to quaternary structure, monomer. Requires Mg(2+) as cofactor.

The catalysed reaction is UDP-2,4-diacetamido-2,4,6-trideoxy-beta-L-altrose + H2O = 2,4-diacetamido-2,4,6-trideoxy-beta-L-altrose + UDP + H(+). The enzyme catalyses pseudaminate + CTP = CMP-pseudaminate + diphosphate. In terms of biological role, catalyzes the fourth and sixth steps in the biosynthesis of pseudaminic acid, a sialic-acid-like sugar that is used to modify flagellin. The C-terminus mediates the fourth step of the pathway and catalyzes the removal of UDP from C-1 of UDP-2,4-diacetamido-2,4,6-trideoxy-beta-L-altropyranose forming 2,4-diacetamido-2,4,6-trideoxy-beta-L-altropyranose. The N-terminal part mediates the last step of the pathway by mediating activation of pseudaminic acid with CMP by forming CMP-pseudaminic acid. The protein is Pseudaminic acid cytidylyltransferase and UDP-2,4-diacetamido-2,4,6-trideoxy-beta-L-altropyranose hydrolase of Helicobacter pylori (strain ATCC 700392 / 26695) (Campylobacter pylori).